Consider the following 736-residue polypeptide: MCEKAKKLVIGNWKDNETDAEKVQKKPFLKGTKSSIWGSSASDISGQSRSLKSSSSVLSSKFVTKRLFTIQHGIEGQKPNFKIRSESFSGPHSAGGFSKSTRESRSKSRSMGNGKFRGKSHLRSSSESAHSSGSESSSSDSNSGSSSDSDSTTGSSSHGSDTGERPRMRSAVFRIHETWQSPNSFKAVKTSRENKESRSRSSSLPQKRFCPSKTQNDLTYGSPEPKSPSNRGRNSWRVGMRTPWKKSQSRSMSCSSIQKILVSRSFTRSRSPHRNTLCYQDQSKNPSRPSNYNTWKQPMDEVYNNAANYRKRHNITLTSWNMRNLPEPVLSFERSGFNATILQQLEDQGYDGPTPIQAQTWSIAKEGKNIVMISGKGTGKTLGYLLPGIMKMHNQRGLMQHKKGPIVLILVDCREAAVMVQREVLYYTNPLELRTHCLLGNSQWQGHAECDLLVASAGRLLQMIDNKKHVVELERCTYLVLDNIDRMIDVGLEGNICRLLCRLRPHAQLIVSSTSWSSNLKRMANKFLGQYTAIRVGEINNIGVRLQNIRQRVEVVNGLSKVERLMKELTAIYDTSDIPGKVVIYVKRQKVVEELVDLIRNCVPCEGIHGGRTAQENQGIIHDFGTGAYNIIVATQMTSNCLDVPGIRYVINYDFPDNIDKYVQRMSRTGCLSYNRNCEVISFFTMANYKLVTEVVDFLKICKQEIGPHLLQLAEEKMFGPRQRRRHRPQRYNRMH.

Disordered stretches follow at residues 32–58 (TKSS…SSVL), 73–166 (GIEG…GERP), 183–237 (NSFK…NSWR), and 265–296 (SFTR…NTWK). 2 stretches are compositionally biased toward low complexity: residues 34-58 (SSIW…SSVL) and 125-160 (SSES…SHGS). Residues 190-199 (TSRENKESRS) show a composition bias toward basic and acidic residues. Polar residues predominate over residues 277–296 (LCYQDQSKNPSRPSNYNTWK). Residues 330–358 (LSFERSGFNATILQQLEDQGYDGPTPIQA) carry the Q motif motif. Residues 361–534 (WSIAKEGKNI…NKFLGQYTAI (174 aa)) enclose the Helicase ATP-binding domain. 374 to 381 (SGKGTGKT) serves as a coordination point for ATP. The short motif at 482–485 (DNID) is the DEAD box element. The Helicase C-terminal domain occupies 561 to 719 (KVERLMKELT…LLQLAEEKMF (159 aa)).

Belongs to the DEAD box helicase family.

The catalysed reaction is ATP + H2O = ADP + phosphate + H(+). Its function is as follows. Probable ATP-binding RNA helicase. The sequence is that of Putative ATP-dependent RNA helicase CG14443 from Drosophila melanogaster (Fruit fly).